Reading from the N-terminus, the 873-residue chain is uncharacterized protein (873 aa).

Disordered regions lie at residues 1–24, 175–251, 375–423, 506–540, 568–592, 662–773, and 822–855; these read MSNKPDANDQCMVKETISRMSMSK, SSAV…TSIS, PSRH…AKKP, DSESASYNTDDANSVVSPSKDGISTTTVSSDATRS, DQSSRYPGRHFGKTGRSHFPRAPEY, ANDS…TSQI, and ANPYSTNNDGNPSNNTSDVEVNETSMNDNSEEPI. A compositionally biased stretch (basic and acidic residues) spans 211–225; that stretch reads KDSDRSQTKNTHEET. Residues 376–385 show a composition bias toward basic residues; sequence SRHHSHRKKE. The segment covering 574 to 586 has biased composition (basic residues); sequence PGRHFGKTGRSHF. Residues 665 to 686 are compositionally biased toward low complexity; the sequence is SPNSSESLESLNNQSYSSSPYS. The span at 698–740 shows a compositional bias: polar residues; sequence QSLNDSPQTSDFKASNLNDSSSNVHSIFQTRETTSPSVQNKTP. A compositionally biased stretch (basic and acidic residues) spans 743–755; sequence YHRELKSSKDGHE. The span at 758–773 shows a compositional bias: low complexity; sequence SPLVSSSPSGSFTSQI. Residues 823–855 are compositionally biased toward polar residues; the sequence is NPYSTNNDGNPSNNTSDVEVNETSMNDNSEEPI.

The protein localises to the cytoplasm. It localises to the vacuole membrane. This is an uncharacterized protein from Schizosaccharomyces pombe (strain 972 / ATCC 24843) (Fission yeast).